A 602-amino-acid chain; its full sequence is Exo-poly-alpha-D-galacturonosidase (602 aa).

The first 27 residues, 1–27 (MKVITFSRRSALASIVATCLMSTPALA), serve as a signal peptide directing secretion. The Fibronectin type-III domain maps to 32–149 (APQKLQIPTL…TVTTTTTAVP (118 aa)). Catalysis depends on Asp395, which acts as the Proton donor. His428 is an active-site residue.

It belongs to the glycosyl hydrolase 28 family.

Its subcellular location is the secreted. The catalysed reaction is [(1-&gt;4)-alpha-D-galacturonosyl](n) + H2O = alpha-D-galacturonosyl-(1-&gt;4)-D-galacturonate + [(1-&gt;4)-alpha-D-galacturonosyl](n-2). Its function is as follows. Contributes significantly to bacterial utilization of polygalacturonate and the induction of pectate lyase in the presence of extracellular pectic polymers. This chain is Exo-poly-alpha-D-galacturonosidase (pehX), found in Dickeya chrysanthemi (Pectobacterium chrysanthemi).